Reading from the N-terminus, the 109-residue chain is Non-structural protein ORF4a (109 aa).

Interacts with host PRKRA/PACT.

It is found in the host cytoplasm. Functionally, dsRNA-binding protein that plays a role in the inhibition of host innate response. Suppresses host PACT-induced activation of RIGI and MDA5 and thereby circumvents the production of type I interferons. Also prevents the activation of host NF-kappa-B. Inhibits the integrated stress response (ISR) in the infected cell by binding to dsRNA and inhibiting EIF2AK2-mediated phosphorylation of EIF2S1/eIF2-alpha. Stress granule formation is thus inhibited, which allows protein synthesis and viral replication. The protein is Non-structural protein ORF4a (ORF4a) of Middle East respiratory syndrome-related coronavirus (isolate United Kingdom/H123990006/2012) (MERS-CoV).